We begin with the raw amino-acid sequence, 502 residues long: Maturase K (502 aa).

It belongs to the intron maturase 2 family. MatK subfamily.

It localises to the plastid. It is found in the chloroplast. Its function is as follows. Usually encoded in the trnK tRNA gene intron. Probably assists in splicing its own and other chloroplast group II introns. The sequence is that of Maturase K from Cephalotaxus fortunei (Chinese plum-yew).